Here is a 92-residue protein sequence, read N- to C-terminus: Small ribosomal subunit protein uS19 (92 aa).

Belongs to the universal ribosomal protein uS19 family.

Functionally, protein S19 forms a complex with S13 that binds strongly to the 16S ribosomal RNA. The polypeptide is Small ribosomal subunit protein uS19 (Rickettsia felis (strain ATCC VR-1525 / URRWXCal2) (Rickettsia azadi)).